The chain runs to 127 residues: Large ribosomal subunit protein eL32 (127 aa).

The segment covering 38–48 has biased composition (basic and acidic residues); that stretch reads WRRPKGIDSKM. The segment at 38-66 is disordered; sequence WRRPKGIDSKMRLKKKGKPRSPSIGWSSP.

Belongs to the eukaryotic ribosomal protein eL32 family.

This is Large ribosomal subunit protein eL32 from Thermococcus gammatolerans (strain DSM 15229 / JCM 11827 / EJ3).